Here is a 280-residue protein sequence, read N- to C-terminus: Proteasome subunit beta 2 (280 aa).

The propeptide at 1 to 52 (MTERERGQGLPAEFFAVGTASFVELLSRTAPQLLPVNRVRDGSHPMPDIPHG) is removed in mature form; by autocatalysis. Thr53 serves as the catalytic Nucleophile.

The protein belongs to the peptidase T1B family. As to quaternary structure, the 20S proteasome core is composed of 14 alpha and 14 beta subunits that assemble into four stacked heptameric rings, resulting in a barrel-shaped structure. The two inner rings, each composed of seven catalytic beta subunits, are sandwiched by two outer rings, each composed of seven alpha subunits. The catalytic chamber with the active sites is on the inside of the barrel. Has a gated structure, the ends of the cylinder being occluded by the N-termini of the alpha-subunits. Is capped by the proteasome-associated ATPase, ARC.

Its subcellular location is the cytoplasm. It carries out the reaction Cleavage of peptide bonds with very broad specificity.. Its pathway is protein degradation; proteasomal Pup-dependent pathway. The formation of the proteasomal ATPase ARC-20S proteasome complex, likely via the docking of the C-termini of ARC into the intersubunit pockets in the alpha-rings, may trigger opening of the gate for substrate entry. Interconversion between the open-gate and close-gate conformations leads to a dynamic regulation of the 20S proteasome proteolysis activity. In terms of biological role, component of the proteasome core, a large protease complex with broad specificity involved in protein degradation. This is Proteasome subunit beta 2 from Thermomonospora curvata (strain ATCC 19995 / DSM 43183 / JCM 3096 / KCTC 9072 / NBRC 15933 / NCIMB 10081 / Henssen B9).